The chain runs to 644 residues: Acetolactate synthase 1, chloroplastic (644 aa).

A chloroplast-targeting transit peptide spans 1 to 43 (MATTAAAAAAALSAAATAKTGRKNHQRHHVLPARGRVGAAAVR). A disordered region spans residues 47 to 67 (VSPVTPPSPAPPATPLRPWGP). Residues 50-61 (VTPPSPAPPATP) are compositionally biased toward pro residues. Glu-118 is a binding site for thiamine diphosphate. A disulfide bond links Cys-138 and Cys-284. FAD contacts are provided by residues Arg-220, 326–347 (HGTVYANYAVDKADLLLAFGVR), and 369–388 (DIDPAEIGKNKQPHVSICAD). Positions 461–541 (QHQMWAAQYY…VKVMVLNNQH (81 aa)) are thiamine pyrophosphate binding. Mg(2+) contacts are provided by Asp-512 and Asn-539.

The protein belongs to the TPP enzyme family. Requires Mg(2+) as cofactor. Thiamine diphosphate serves as cofactor.

Its subcellular location is the plastid. It localises to the chloroplast. The catalysed reaction is 2 pyruvate + H(+) = (2S)-2-acetolactate + CO2. It functions in the pathway amino-acid biosynthesis; L-isoleucine biosynthesis; L-isoleucine from 2-oxobutanoate: step 1/4. It participates in amino-acid biosynthesis; L-valine biosynthesis; L-valine from pyruvate: step 1/4. In Oryza sativa subsp. japonica (Rice), this protein is Acetolactate synthase 1, chloroplastic (ALS1).